The primary structure comprises 382 residues: D-galactonate dehydratase (382 aa).

Position 183 (Asp183) interacts with Mg(2+). The active-site Proton donor is the His185. Mg(2+) contacts are provided by Glu209 and Glu235. His285 serves as the catalytic Proton acceptor.

Belongs to the mandelate racemase/muconate lactonizing enzyme family. GalD subfamily. The cofactor is Mg(2+).

It catalyses the reaction D-galactonate = 2-dehydro-3-deoxy-D-galactonate + H2O. It participates in carbohydrate acid metabolism; D-galactonate degradation; D-glyceraldehyde 3-phosphate and pyruvate from D-galactonate: step 1/3. In terms of biological role, catalyzes the dehydration of D-galactonate to 2-keto-3-deoxy-D-galactonate. In Salmonella gallinarum (strain 287/91 / NCTC 13346), this protein is D-galactonate dehydratase.